The following is a 380-amino-acid chain: Lipid-A-disaccharide synthase (380 aa).

It belongs to the LpxB family.

The enzyme catalyses a lipid X + a UDP-2-N,3-O-bis[(3R)-3-hydroxyacyl]-alpha-D-glucosamine = a lipid A disaccharide + UDP + H(+). It participates in bacterial outer membrane biogenesis; LPS lipid A biosynthesis. In terms of biological role, condensation of UDP-2,3-diacylglucosamine and 2,3-diacylglucosamine-1-phosphate to form lipid A disaccharide, a precursor of lipid A, a phosphorylated glycolipid that anchors the lipopolysaccharide to the outer membrane of the cell. This chain is Lipid-A-disaccharide synthase, found in Azotobacter vinelandii (strain DJ / ATCC BAA-1303).